A 1464-amino-acid polypeptide reads, in one-letter code: Gag-Pol polyprotein (1464 aa).

Residue glycine 2 is the site of N-myristoyl glycine; by host attachment. Residues 7 to 31 form an interaction with Gp41 region; that stretch reads VLRGKKADELERIRLRPGGKKKYRL. The short motif at 16-22 is the Nuclear export signal element; the sequence is LERIRLR. Positions 26 to 32 match the Nuclear localization signal motif; sequence KKKYRLK. The interval 111–136 is disordered; that stretch reads ETGTAEKMPSTSRPTAPSSEKGGNYP. The segment covering 119–128 has biased composition (polar residues); that stretch reads PSTSRPTAPS. Tyrosine 135 carries the phosphotyrosine; by host modification. The tract at residues 191-228 is interaction with human PPIA/CYPA and NUP153; sequence NCVGDHQAAMQIIREIINEEAAEWDVQHPIPGPLPAGQ. Residues 279–365 form a dimerization/Multimerization of capsid protein p24 region; that stretch reads YNPTNILDIK…GGPGQKARLM (87 aa). 2 consecutive CCHC-type zinc fingers follow at residues 389 to 406 and 410 to 427; these read FKCWNCGKEGHSARQCRA and QGCWKCGKPGHIMTNCPD. Residues 432-500 form a disordered region; it reads FLRTGPLGKE…RGLTAPRAGG (69 aa). Positions 456 to 469 are enriched in low complexity; sequence TNSTPSGSSSGSTG. A compositionally biased stretch (basic and acidic residues) spans 473 to 485; that stretch reads AAREKTERAERET. The segment at 514–518 is dimerization of protease; it reads PQFSL. In terms of domain architecture, Peptidase A2 spans 533–602; the sequence is VEVLLDTGAD…TPINIFGRNI (70 aa). Aspartate 538 serves as the catalytic For protease activity; shared with dimeric partner. 2 dimerization of protease regions span residues 562-568 and 601-613; these read GIGGFIN and NILTALGMSLNLP. In terms of domain architecture, Reverse transcriptase spans 656–846; the sequence is EGQLEEAPPT…PPYHWMGYEL (191 aa). Positions 722, 797, and 798 each coordinate Mg(2+). Residues 839 to 847 are RT 'primer grip'; the sequence is YHWMGYELW. A Tryptophan repeat motif motif is present at residues 1009–1025; that stretch reads WEQWWDNYWQVTWIPDW. Residues 1045–1168 enclose the RNase H type-1 domain; that stretch reads IPGAETFYTD…VDHLVSQGIR (124 aa). 4 residues coordinate Mg(2+): aspartate 1054, glutamate 1089, aspartate 1109, and aspartate 1160. The Integrase-type zinc finger occupies 1174 to 1215; it reads EKIEPAQEEHEKYHSNVKELSHKFGIPNLVARQIVNSCAQCQ. Zn(2+) contacts are provided by histidine 1183, histidine 1187, cysteine 1211, and cysteine 1214. Residues 1224–1375 enclose the Integrase catalytic domain; that stretch reads QVNAELGTWQ…TPSERLINMI (152 aa). Residues aspartate 1235, aspartate 1287, and glutamate 1323 each coordinate Mg(2+). The segment at residues 1394–1441 is a DNA-binding region (integrase-type); it reads FRVYFREGRDQLWKGPGELLWKGEGAVLVKVGTDIKIIPRRKAKIIRD.

As to quaternary structure, homotrimer; further assembles as hexamers of trimers. Interacts with gp41 (via C-terminus). Interacts with host CALM1; this interaction induces a conformational change in the Matrix protein, triggering exposure of the myristate group. Interacts with host AP3D1; this interaction allows the polyprotein trafficking to multivesicular bodies during virus assembly. Part of the pre-integration complex (PIC) which is composed of viral genome, matrix protein, Vpr and integrase. In terms of assembly, homodimer; the homodimer further multimerizes as homohexamers or homopentamers. Interacts with human PPIA/CYPA. Interacts with human NUP153. Interacts with host PDZD8; this interaction stabilizes the capsid. Interacts with monkey TRIM5; this interaction destabilizes the capsid. Homodimer, whose active site consists of two apposed aspartic acid residues. As to quaternary structure, heterodimer of p66 RT and p51 RT (RT p66/p51). Heterodimerization of RT is essential for DNA polymerase activity. The overall folding of the subdomains is similar in p66 RT and p51 RT but the spatial arrangements of the subdomains are dramatically different. In terms of assembly, homotetramer; may further associate as a homohexadecamer. Part of the pre-integration complex (PIC) which is composed of viral genome, matrix protein, Vpr and integrase. Interacts with human SMARCB1/INI1 and human PSIP1/LEDGF isoform 1. Interacts with human KPNA3; this interaction might play a role in nuclear import of the pre-integration complex. Interacts with human NUP153; this interaction might play a role in nuclear import of the pre-integration complex. The cofactor is Mg(2+). Post-translationally, specific enzymatic cleavages by the viral protease yield mature proteins. The protease is released by autocatalytic cleavage. The polyprotein is cleaved during and after budding, this process is termed maturation. Proteolytic cleavage of p66 RT removes the RNase H domain to yield the p51 RT subunit. Nucleocapsid protein p7 might be further cleaved after virus entry.

It localises to the host cell membrane. Its subcellular location is the host endosome. It is found in the host multivesicular body. The protein localises to the virion membrane. The protein resides in the host nucleus. It localises to the host cytoplasm. Its subcellular location is the virion. The catalysed reaction is Endopeptidase for which the P1 residue is preferably hydrophobic.. The enzyme catalyses Endohydrolysis of RNA in RNA/DNA hybrids. Three different cleavage modes: 1. sequence-specific internal cleavage of RNA. Human immunodeficiency virus type 1 and Moloney murine leukemia virus enzymes prefer to cleave the RNA strand one nucleotide away from the RNA-DNA junction. 2. RNA 5'-end directed cleavage 13-19 nucleotides from the RNA end. 3. DNA 3'-end directed cleavage 15-20 nucleotides away from the primer terminus.. It carries out the reaction 3'-end directed exonucleolytic cleavage of viral RNA-DNA hybrid.. It catalyses the reaction DNA(n) + a 2'-deoxyribonucleoside 5'-triphosphate = DNA(n+1) + diphosphate. Protease: The viral protease is inhibited by many synthetic protease inhibitors (PIs), such as amprenavir, atazanavir, indinavir, loprinavir, nelfinavir, ritonavir and saquinavir. Use of protease inhibitors in tritherapy regimens permit more ambitious therapeutic strategies. Reverse transcriptase/ribonuclease H: RT can be inhibited either by nucleoside RT inhibitors (NRTIs) or by non nucleoside RT inhibitors (NNRTIs). NRTIs act as chain terminators, whereas NNRTIs inhibit DNA polymerization by binding a small hydrophobic pocket near the RT active site and inducing an allosteric change in this region. Classical NRTIs are abacavir, adefovir (PMEA), didanosine (ddI), lamivudine (3TC), stavudine (d4T), tenofovir (PMPA), zalcitabine (ddC), and zidovudine (AZT). Classical NNRTIs are atevirdine (BHAP U-87201E), delavirdine, efavirenz (DMP-266), emivirine (I-EBU), and nevirapine (BI-RG-587). The tritherapies used as a basic effective treatment of AIDS associate two NRTIs and one NNRTI. In terms of biological role, mediates, with Gag polyprotein, the essential events in virion assembly, including binding the plasma membrane, making the protein-protein interactions necessary to create spherical particles, recruiting the viral Env proteins, and packaging the genomic RNA via direct interactions with the RNA packaging sequence (Psi). Gag-Pol polyprotein may regulate its own translation, by the binding genomic RNA in the 5'-UTR. At low concentration, the polyprotein would promote translation, whereas at high concentration, the polyprotein would encapsidate genomic RNA and then shut off translation. Targets the polyprotein to the plasma membrane via a multipartite membrane-binding signal, that includes its myristoylated N-terminus. Matrix protein is part of the pre-integration complex. Implicated in the release from host cell mediated by Vpu. Binds to RNA. Its function is as follows. Forms the conical core that encapsulates the genomic RNA-nucleocapsid complex in the virion. Most core are conical, with only 7% tubular. The core is constituted by capsid protein hexamer subunits. The core is disassembled soon after virion entry. Host restriction factors such as TRIM5-alpha or TRIMCyp bind retroviral capsids and cause premature capsid disassembly, leading to blocks in reverse transcription. Capsid restriction by TRIM5 is one of the factors which restricts HIV-1 to the human species. Host PIN1 apparently facilitates the virion uncoating. On the other hand, interactions with PDZD8 or CYPA stabilize the capsid. Functionally, encapsulates and protects viral dimeric unspliced genomic RNA (gRNA). Binds these RNAs through its zinc fingers. Acts as a nucleic acid chaperone which is involved in rearangement of nucleic acid secondary structure during gRNA retrotranscription. Also facilitates template switch leading to recombination. As part of the polyprotein, participates in gRNA dimerization, packaging, tRNA incorporation and virion assembly. In terms of biological role, aspartyl protease that mediates proteolytic cleavages of Gag and Gag-Pol polyproteins during or shortly after the release of the virion from the plasma membrane. Cleavages take place as an ordered, step-wise cascade to yield mature proteins. This process is called maturation. Displays maximal activity during the budding process just prior to particle release from the cell. Also cleaves Nef and Vif, probably concomitantly with viral structural proteins on maturation of virus particles. Hydrolyzes host EIF4GI and PABP1 in order to shut off the capped cellular mRNA translation. The resulting inhibition of cellular protein synthesis serves to ensure maximal viral gene expression and to evade host immune response. Multifunctional enzyme that converts the viral RNA genome into dsDNA in the cytoplasm, shortly after virus entry into the cell. This enzyme displays a DNA polymerase activity that can copy either DNA or RNA templates, and a ribonuclease H (RNase H) activity that cleaves the RNA strand of RNA-DNA heteroduplexes in a partially processive 3' to 5' endonucleasic mode. Conversion of viral genomic RNA into dsDNA requires many steps. A tRNA(3)-Lys binds to the primer-binding site (PBS) situated at the 5'-end of the viral RNA. RT uses the 3' end of the tRNA primer to perform a short round of RNA-dependent minus-strand DNA synthesis. The reading proceeds through the U5 region and ends after the repeated (R) region which is present at both ends of viral RNA. The portion of the RNA-DNA heteroduplex is digested by the RNase H, resulting in a ssDNA product attached to the tRNA primer. This ssDNA/tRNA hybridizes with the identical R region situated at the 3' end of viral RNA. This template exchange, known as minus-strand DNA strong stop transfer, can be either intra- or intermolecular. RT uses the 3' end of this newly synthesized short ssDNA to perform the RNA-dependent minus-strand DNA synthesis of the whole template. RNase H digests the RNA template except for two polypurine tracts (PPTs) situated at the 5'-end and near the center of the genome. It is not clear if both polymerase and RNase H activities are simultaneous. RNase H probably can proceed both in a polymerase-dependent (RNA cut into small fragments by the same RT performing DNA synthesis) and a polymerase-independent mode (cleavage of remaining RNA fragments by free RTs). Secondly, RT performs DNA-directed plus-strand DNA synthesis using the PPTs that have not been removed by RNase H as primers. PPTs and tRNA primers are then removed by RNase H. The 3' and 5' ssDNA PBS regions hybridize to form a circular dsDNA intermediate. Strand displacement synthesis by RT to the PBS and PPT ends produces a blunt ended, linear dsDNA copy of the viral genome that includes long terminal repeats (LTRs) at both ends. Its function is as follows. Catalyzes viral DNA integration into the host chromosome, by performing a series of DNA cutting and joining reactions. This enzyme activity takes place after virion entry into a cell and reverse transcription of the RNA genome in dsDNA. The first step in the integration process is 3' processing. This step requires a complex comprising the viral genome, matrix protein, Vpr and integrase. This complex is called the pre-integration complex (PIC). The integrase protein removes 2 nucleotides from each 3' end of the viral DNA, leaving recessed CA OH's at the 3' ends. In the second step, the PIC enters cell nucleus. This process is mediated through integrase and Vpr proteins, and allows the virus to infect a non dividing cell. This ability to enter the nucleus is specific of lentiviruses, other retroviruses cannot and rely on cell division to access cell chromosomes. In the third step, termed strand transfer, the integrase protein joins the previously processed 3' ends to the 5' ends of strands of target cellular DNA at the site of integration. The 5'-ends are produced by integrase-catalyzed staggered cuts, 5 bp apart. A Y-shaped, gapped, recombination intermediate results, with the 5'-ends of the viral DNA strands and the 3' ends of target DNA strands remaining unjoined, flanking a gap of 5 bp. The last step is viral DNA integration into host chromosome. This involves host DNA repair synthesis in which the 5 bp gaps between the unjoined strands are filled in and then ligated. Since this process occurs at both cuts flanking the HIV genome, a 5 bp duplication of host DNA is produced at the ends of HIV-1 integration. Alternatively, Integrase may catalyze the excision of viral DNA just after strand transfer, this is termed disintegration. This Homo sapiens (Human) protein is Gag-Pol polyprotein (gag-pol).